A 124-amino-acid polypeptide reads, in one-letter code: Late histone H2B.2.2 (124 aa).

Positions Met1–Arg32 are disordered. Residues Gly10 to Gly19 are compositionally biased toward basic residues. Residue Ser111 is glycosylated (O-linked (GlcNAc) serine). Lys119 is covalently cross-linked (Glycyl lysine isopeptide (Lys-Gly) (interchain with G-Cter in ubiquitin)).

The protein belongs to the histone H2B family. The nucleosome is a histone octamer containing two molecules each of H2A, H2B, H3 and H4 assembled in one H3-H4 heterotetramer and two H2A-H2B heterodimers. The octamer wraps approximately 147 bp of DNA. Post-translationally, monoubiquitination of Lys-119 gives a specific tag for epigenetic transcriptional activation and is also prerequisite for histone H3 'Lys-4' and 'Lys-79' methylation. GlcNAcylation at Ser-111 promotes monoubiquitination of Lys-119. It fluctuates in response to extracellular glucose, and associates with transcribed genes.

The protein localises to the nucleus. It is found in the chromosome. Its function is as follows. Core component of nucleosome. Nucleosomes wrap and compact DNA into chromatin, limiting DNA accessibility to the cellular machineries which require DNA as a template. Histones thereby play a central role in transcription regulation, DNA repair, DNA replication and chromosomal stability. DNA accessibility is regulated via a complex set of post-translational modifications of histones, also called histone code, and nucleosome remodeling. The sequence is that of Late histone H2B.2.2 from Psammechinus miliaris (Green sea urchin).